A 218-amino-acid chain; its full sequence is Glutathione S-transferase Mu 2 (218 aa).

In terms of domain architecture, GST N-terminal spans 2–88; it reads PMTLGYWDIR…YLARKHNLCG (87 aa). 7 to 8 contributes to the glutathione binding site; it reads YW. 2 positions are modified to phosphoserine: serine 27 and serine 44. Glutathione-binding positions include 43–46, lysine 50, 59–60, and 72–73; these read RSQW, NL, and QS. Residues 90 to 208 form the GST C-terminal domain; that stretch reads TEEERIRVDI…KSSRFLSKPI (119 aa). Tyrosine 116 is a binding site for substrate. At serine 117 the chain carries Phosphoserine.

This sequence belongs to the GST superfamily. Mu family. As to quaternary structure, homodimer.

Its subcellular location is the cytoplasm. The catalysed reaction is RX + glutathione = an S-substituted glutathione + a halide anion + H(+). It carries out the reaction 11(S)-hydroxy-14(S),15(S)-epoxy-(5Z,8Z,12E)-eicosatrienoate + glutathione = (11S,15S)-dihydroxy-14(R)-S-glutathionyl-(5Z,8Z,12E)-eicosatrienoate. Its function is as follows. Conjugation of reduced glutathione to a wide number of exogenous and endogenous hydrophobic electrophiles. Participates in the formation of novel hepoxilin regioisomers. The chain is Glutathione S-transferase Mu 2 from Mus musculus (Mouse).